A 621-amino-acid chain; its full sequence is Chaperone protein HtpG (621 aa).

The interval M1–R328 is a; substrate-binding. Positions E329–R544 are b. A disordered region spans residues D478 to D498. A compositionally biased stretch (basic and acidic residues) spans S486–D498. Positions F545 to L621 are c.

The protein belongs to the heat shock protein 90 family. Homodimer.

The protein localises to the cytoplasm. Molecular chaperone. Has ATPase activity. The polypeptide is Chaperone protein HtpG (Rickettsia bellii (strain RML369-C)).